The primary structure comprises 200 residues: Large ribosomal subunit protein uL4 (200 aa).

The tract at residues 42–65 (TRAQKTRSEVSGGGAKPWRQKGTG) is disordered.

It belongs to the universal ribosomal protein uL4 family. In terms of assembly, part of the 50S ribosomal subunit.

One of the primary rRNA binding proteins, this protein initially binds near the 5'-end of the 23S rRNA. It is important during the early stages of 50S assembly. It makes multiple contacts with different domains of the 23S rRNA in the assembled 50S subunit and ribosome. Functionally, forms part of the polypeptide exit tunnel. The chain is Large ribosomal subunit protein uL4 from Vibrio atlanticus (strain LGP32) (Vibrio splendidus (strain Mel32)).